A 327-amino-acid polypeptide reads, in one-letter code: Biotin synthase (327 aa).

The Radical SAM core domain occupies 49 to 273; that stretch reads FNKDKIDLCS…ICIARIALPD (225 aa). Positions 67, 71, and 74 each coordinate [4Fe-4S] cluster. Residues Ser110, Cys142, Cys201, and Arg277 each contribute to the [2Fe-2S] cluster site.

Belongs to the radical SAM superfamily. Biotin synthase family. Homodimer. The cofactor is [4Fe-4S] cluster. [2Fe-2S] cluster is required as a cofactor.

The enzyme catalyses (4R,5S)-dethiobiotin + (sulfur carrier)-SH + 2 reduced [2Fe-2S]-[ferredoxin] + 2 S-adenosyl-L-methionine = (sulfur carrier)-H + biotin + 2 5'-deoxyadenosine + 2 L-methionine + 2 oxidized [2Fe-2S]-[ferredoxin]. The protein operates within cofactor biosynthesis; biotin biosynthesis; biotin from 7,8-diaminononanoate: step 2/2. Its function is as follows. Catalyzes the conversion of dethiobiotin (DTB) to biotin by the insertion of a sulfur atom into dethiobiotin via a radical-based mechanism. The polypeptide is Biotin synthase (Methanococcus maripaludis (strain C6 / ATCC BAA-1332)).